The chain runs to 967 residues: Probable helicase DDB_G0274399 (967 aa).

The segment at 161 to 192 is disordered; it reads EMTDDEDTAPTSAATHVGAPTKSTTTTTTTTT. 357-364 is a binding site for ATP; the sequence is GPPGTGKT. Disordered regions lie at residues 529–553 and 892–967; these read SAIP…QDTS and QKQK…RTRR. The stretch at 890 to 949 forms a coiled coil; it reads NLQKQKDIEKRKKQHKRQKQKSKENDKKKQLKKRKELNNNDNNNNNKESSNKEVQEITNA. The segment covering 900–909 has biased composition (basic residues); that stretch reads RKKQHKRQKQ. The segment covering 928 to 937 has biased composition (low complexity); sequence NNDNNNNNKE.

This sequence belongs to the DNA2/NAM7 helicase family.

The protein resides in the nucleus. The sequence is that of Probable helicase DDB_G0274399 from Dictyostelium discoideum (Social amoeba).